Here is a 347-residue protein sequence, read N- to C-terminus: GMP reductase (347 aa).

108 to 131 (AEFEKVKKIMALSEEFVFICIDIA) is a binding site for NADP(+). Positions 181 and 183 each coordinate K(+). The active-site Thioimidate intermediate is Cys-186. 216–239 (IIGDGGCSCAGDVSKAFGGGADFV) lines the NADP(+) pocket.

The protein belongs to the IMPDH/GMPR family. GuaC type 1 subfamily. As to quaternary structure, homotetramer.

The catalysed reaction is IMP + NH4(+) + NADP(+) = GMP + NADPH + 2 H(+). Functionally, catalyzes the irreversible NADPH-dependent deamination of GMP to IMP. It functions in the conversion of nucleobase, nucleoside and nucleotide derivatives of G to A nucleotides, and in maintaining the intracellular balance of A and G nucleotides. The chain is GMP reductase from Vibrio atlanticus (strain LGP32) (Vibrio splendidus (strain Mel32)).